We begin with the raw amino-acid sequence, 173 residues long: Large ribosomal subunit protein uL10 (173 aa).

Belongs to the universal ribosomal protein uL10 family. Part of the ribosomal stalk of the 50S ribosomal subunit. The N-terminus interacts with L11 and the large rRNA to form the base of the stalk. The C-terminus forms an elongated spine to which L12 dimers bind in a sequential fashion forming a multimeric L10(L12)X complex.

Forms part of the ribosomal stalk, playing a central role in the interaction of the ribosome with GTP-bound translation factors. This Thiobacillus denitrificans (strain ATCC 25259 / T1) protein is Large ribosomal subunit protein uL10.